Reading from the N-terminus, the 257-residue chain is Receptor expression-enhancing protein 4 (257 aa).

Helical transmembrane passes span 1-21 (MVSWMICRLVVLVFGMLCPAY) and 42-62 (WIVFALFMAAEIITDIFISWF). 2 positions are modified to phosphoserine: S152 and S194. The interval 178-257 (PHQRPPIGYR…KKTVPSDMDS (80 aa)) is disordered. Residue T196 is modified to Phosphothreonine. The residue at position 202 (S202) is a Phosphoserine. Phosphothreonine is present on T250. S253 is subject to Phosphoserine.

It belongs to the DP1 family.

It is found in the endoplasmic reticulum membrane. Microtubule-binding protein required to ensure proper cell division and nuclear envelope reassembly by sequestering the endoplasmic reticulum away from chromosomes during mitosis. Probably acts by clearing the endoplasmic reticulum membrane from metaphase chromosomes. The protein is Receptor expression-enhancing protein 4 (REEP4) of Pongo abelii (Sumatran orangutan).